A 185-amino-acid chain; its full sequence is MIVLRSRSPRRKYVLESLDLDFRIEPEDIDESSLKNEHPLEYLKRICLSKLGTRSKDEFLISCDTIVVQENSILQKPKNFLEAVEMLERLSGKTHKVASGLGIYYKGLERFAFEFSQVHFRSWNHKQIREYVEKYSPFDKAGSYGVQDKEGPVRSFDGSYTNILGFPIRTFFQYHEFWKKYLKGN.

The Proton acceptor role is filled by Asp64.

This sequence belongs to the Maf family. YhdE subfamily. It depends on a divalent metal cation as a cofactor.

The protein localises to the cytoplasm. The catalysed reaction is dTTP + H2O = dTMP + diphosphate + H(+). It carries out the reaction UTP + H2O = UMP + diphosphate + H(+). In terms of biological role, nucleoside triphosphate pyrophosphatase that hydrolyzes dTTP and UTP. May have a dual role in cell division arrest and in preventing the incorporation of modified nucleotides into cellular nucleic acids. This chain is dTTP/UTP pyrophosphatase, found in Leptospira borgpetersenii serovar Hardjo-bovis (strain JB197).